The chain runs to 283 residues: Urease accessory protein UreD 1 (283 aa).

Belongs to the UreD family. In terms of assembly, ureD, UreF and UreG form a complex that acts as a GTP-hydrolysis-dependent molecular chaperone, activating the urease apoprotein by helping to assemble the nickel containing metallocenter of UreC. The UreE protein probably delivers the nickel.

It is found in the cytoplasm. In terms of biological role, required for maturation of urease via the functional incorporation of the urease nickel metallocenter. The sequence is that of Urease accessory protein UreD 1 from Brucella anthropi (strain ATCC 49188 / DSM 6882 / CCUG 24695 / JCM 21032 / LMG 3331 / NBRC 15819 / NCTC 12168 / Alc 37) (Ochrobactrum anthropi).